A 111-amino-acid chain; its full sequence is uncharacterized protein (111 aa).

The next 2 membrane-spanning stretches (helical) occupy residues L18–S38 and L42–P62.

It is found in the membrane. This is an uncharacterized protein from Saccharomyces cerevisiae (strain ATCC 204508 / S288c) (Baker's yeast).